We begin with the raw amino-acid sequence, 363 residues long: Lovastatin nonaketide synthase, enoyl reductase component lovC (363 aa).

NADP(+) contacts are provided by residues 51–54 (SDTK), 174–177 (STAT), 197–200 (SPHN), Tyr215, 262–263 (LN), Thr280, and 351–352 (LS). The segment at 226 to 272 (TYTKNNLRYALDCITNVESTTFCFAAIGRAGGHYVSLNPFPEHAATR) is lovB-binding.

The protein belongs to the zinc-containing alcohol dehydrogenase family. Each MAT domain from the lovB homodimer binds one lovC molecule to form the final active lovB-lovC megasynthase complex.

It carries out the reaction holo-[lovastatin nonaketide synthase] + 9 malonyl-CoA + S-adenosyl-L-methionine + 11 NADPH + 19 H(+) = dihydromonacolin L-[lovastatin nonaketide synthase] + S-adenosyl-L-homocysteine + 9 CO2 + 11 NADP(+) + 9 CoA + 6 H2O. It participates in polyketide biosynthesis; lovastatin biosynthesis. Its function is as follows. Trans-enoyl reductase; part of the gene cluster that mediates the biosynthesis of lovastatin (also known as mevinolin, mevacor or monacolin K), a hypolipidemic inhibitor of (3S)-hydroxymethylglutaryl-coenzyme A (HMG-CoA) reductase (HMGR). The first step in the biosynthesis of lovastatin is the production of dihydromonacolin L acid (DML) by the lovastatin nonaketide synthase lovB and the trans-acting enoyl reductase lovC (called the lovB-lovC megasynthase complex) via condensation of one acetyl-CoA unit and 8 malonyl-CoA units. The formation of the LovB/C complex is essential for the integrity of the catalytic chamber to the complete total synthesis of DML acid. Dihydromonacolin L acid is released from lovB by the thioesterase lovG. Next, dihydromonacolin L acid is oxidized by the dihydromonacolin L monooxygenase lovA twice to form monacolin J acid. The 2-methylbutyrate moiety of lovastatin is synthesized by the lovastatin diketide synthase lovF via condensation of one acetyl-CoA unit and one malonyl-CoA unit. Finally, the covalent attachment of this moiety to monacolin J acid is catalyzed by the transesterase lovD to yield lovastatin. LovD has broad substrate specificity and can also convert monacolin J to simvastatin using alpha-dimethylbutanoyl-S-methyl-3-mercaptopropionate (DMB-S-MMP) as the thioester acyl donor, and can also catalyze the reverse reaction and function as hydrolase in vitro. LovD has much higher activity with LovF-bound 2-methylbutanoate than with free diketide substrates. In Aspergillus terreus, this protein is Lovastatin nonaketide synthase, enoyl reductase component lovC.